The sequence spans 198 residues: Small ribosomal subunit protein uS2 (198 aa).

It belongs to the universal ribosomal protein uS2 family.

This is Small ribosomal subunit protein uS2 (rps2) from Methanothermobacter thermautotrophicus (strain ATCC 29096 / DSM 1053 / JCM 10044 / NBRC 100330 / Delta H) (Methanobacterium thermoautotrophicum).